The chain runs to 560 residues: MADNLRKLVSTESLRSMQDKLENWLREYNNNSCDQNLNYCLELIEQVAKVQGQLFGILTTAAQEGGHYDGVETIKSRLLPWLEASFTAASLGKPVDSKIPSLQDTFDKERQKESVIRDRNIHQLDADLNTTRNQLNQVQDDLAETEKTLEETKNRSAISLLAAEEEINQLRKQLKCLQAQEESRHRPPEHRSSEKRGSERRRVEPRGADRCGAAQRKAEEICDYEKQLRTLKDEIAVLSAEKSVLQGRSTRSRSPSPASCSRSRSHSHSRSRSHSHSRSGSHSRSHSRNHSRSRSASPSTAVSGVRSPSPNRAKLSSVARKAALLSRFSDAYSQARLDAQCLLRRCIDKAETVQRIIYIATVEAFHVAKMAFRHFKIRVRKSLTPSYAGSNDFEDAVLDYIICHLDLYDSQSSVNDVIRAMNVNPKISFPPEVDFCLLSNFIQEICCIAFAMQTLDPPLDIAFGADGEIFNDCKYRRSYDSDFTAPLVFYHVWPALMENDCVIMKGEAVTRRGAFWNSVRSVTRCRSRSLSPICPRSRVGLSTISRSRSPSPIRCGLPRF.

The interaction with YWHAG/14-3-3 protein gamma stretch occupies residues 1 to 294 (MADNLRKLVS…SHSRNHSRSR (294 aa)). A phosphoserine mark is found at Ser13, Ser85, Ser156, and Ser159. 2 coiled-coil regions span residues 118 to 186 (DRNI…SRHR) and 223 to 248 (DYEKQLRTLKDEIAVLSAEKSVLQGR). Disordered regions lie at residues 178–217 (QAQEESRHRPPEHRSSEKRGSERRRVEPRGADRCGAAQRK) and 243–316 (SVLQ…AKLS). A compositionally biased stretch (basic and acidic residues) spans 181–209 (EESRHRPPEHRSSEKRGSERRRVEPRGAD). The segment covering 248–262 (RSTRSRSPSPASCSR) has biased composition (low complexity). Residues 263-293 (SRSHSHSRSRSHSHSRSGSHSRSHSRNHSRS) show a composition bias toward basic residues. Polar residues predominate over residues 300–310 (TAVSGVRSPSP). A phosphoserine mark is found at Ser307, Ser309, and Ser531.

Belongs to the MIEAP family. In terms of assembly, interacts (via coiled-coil domains) with BNIP3L (via BH3 domain). Interacts (via coiled-coil domains) with BNIP3 (via BH3 domain). Interacts with YWHAG/14-3-3 protein gamma; a protein that also plays a role in MALM.

The protein localises to the cytoplasm. Its subcellular location is the cytosol. It localises to the mitochondrion outer membrane. The protein resides in the mitochondrion matrix. Functionally, key regulator of mitochondrial quality that mediates the repairing or degradation of unhealthy mitochondria in response to mitochondrial damage. Mediator of mitochondrial protein catabolic process (also named MALM) by mediating the degradation of damaged proteins inside mitochondria by promoting the accumulation in the mitochondrial matrix of hydrolases that are characteristic of the lysosomal lumen. Also involved in mitochondrion degradation of damaged mitochondria by promoting the formation of vacuole-like structures (named MIV), which engulf and degrade unhealthy mitochondria by accumulating lysosomes. The physical interaction of SPATA18/MIEAP, BNIP3 and BNIP3L/NIX at the mitochondrial outer membrane regulates the opening of a pore in the mitochondrial double membrane in order to mediate the translocation of lysosomal proteins from the cytoplasm to the mitochondrial matrix. Binds cardiolipin. May form molecular condensates (non-membrane-bounded organelles) within mitochondria that compartmentalize and promote cardiolipin metabolism. This chain is Mitochondria-eating protein (SPATA18), found in Sus scrofa (Pig).